We begin with the raw amino-acid sequence, 374 residues long: MIPVFLAAIAVFLPLTSGHIAFWHNSMYGFNVTEQTFPYDNRPVVPLQNMTFKEWWFHNHLDYPPHPGDFFELPAGKPAMAELACNKGATTWFNSSEGGNIQNGDDPCPGSPPSEYHTTGFDDLKGCALAIAYEPDVTKIKPEDFTIFSVNQTCVWYRFTDFQVPERMPSCPPGGCHCAWFWIHSPDSGGEQIYMNGFKCKITGSTSNVPLAKPKVARRCGADPDHGKPDAVPGNCTYGAKQPLYWLQQEGNNEFDDYIAPPFYNDLYNFKDGAQNDIFIDSYPHGIPDPSPEQTIIPTPLDAAVISNATPAPSNGSCSSRPPSSPVSSSAASTTTSRSPRPSARGFRRSTGEKAHTGLPRKSWTQSRKMRYVF.

The signal sequence occupies residues 1-18; it reads MIPVFLAAIAVFLPLTSG. N-linked (GlcNAc...) asparagine glycans are attached at residues Asn-31, Asn-49, Asn-94, and Asn-151. Intrachain disulfides connect Cys-85-Cys-108, Cys-127-Cys-154, Cys-171-Cys-176, Cys-178-Cys-200, and Cys-220-Cys-236. N-linked (GlcNAc...) asparagine glycans are attached at residues Asn-235 and Asn-315. Residues 306-374 are disordered; the sequence is ISNATPAPSN…TQSRKMRYVF (69 aa). Residues 313–344 are compositionally biased toward low complexity; sequence PSNGSCSSRPPSSPVSSSAASTTTSRSPRPSA.

This sequence belongs to the polysaccharide monooxygenase AA14 family. It depends on Cu(2+) as a cofactor.

It localises to the secreted. In terms of biological role, lytic polysaccharide monooxygenase (LPMO) that oxidatively cleaves xylan with both C1 and C4 regioselectivity and that specifically targets the protective shield made by heteroxylans that cover cellulose microfibrils in wood. Catalysis by LPMOs requires the reduction of the active-site copper from Cu(II) to Cu(I) by a reducing agent and H(2)O(2) or O(2) as a cosubstrate. Cleavage occurs only when xylans are bound to cellulose and not when they are in solution. Increases the efficiency of wood saccharification through oxidative cleavage of highly refractory xylan-coated cellulose fibers via synergistic relationship with xylan-active enzymes, xylobiohydrolases and cellobiohydrolases. The protein is AA14 family lytic polysaccharide monooxygenase B of Pycnoporus cinnabarinus (Cinnabar-red polypore).